The following is a 64-amino-acid chain: SPbeta prophage-derived uncharacterized protein YonP (64 aa).

The chain is SPbeta prophage-derived uncharacterized protein YonP (yonP) from Bacillus subtilis (strain 168).